A 230-amino-acid chain; its full sequence is MVQRSKKYREAAEKIDRNNLYTANEAIALLKSMPEYKFDQTVEAVLRLNVDPRKADQLVRGSVNLPNGTGKTAKVLVFARGPKATEALEAGADIVGDDDLVQKVADGFLDFDSVVATPDMMGKVGRLGRVLGPRGLMPNPKTGTVTMDVTKAIKDIKGGKVDFRVDKNGNLSFLIGKMSFTEQALDENFKAVADEVKRLKPSTVKGRYVTKATITSTMNPGVPVDPAVVA.

Belongs to the universal ribosomal protein uL1 family. In terms of assembly, part of the 50S ribosomal subunit.

In terms of biological role, binds directly to 23S rRNA. The L1 stalk is quite mobile in the ribosome, and is involved in E site tRNA release. Protein L1 is also a translational repressor protein, it controls the translation of the L11 operon by binding to its mRNA. The sequence is that of Large ribosomal subunit protein uL1 from Bifidobacterium adolescentis (strain ATCC 15703 / DSM 20083 / NCTC 11814 / E194a).